The chain runs to 293 residues: Bifunctional protein FolD (293 aa).

Residues 169–171 (GRG), Thr196, and Val237 contribute to the NADP(+) site.

This sequence belongs to the tetrahydrofolate dehydrogenase/cyclohydrolase family. As to quaternary structure, homodimer.

The catalysed reaction is (6R)-5,10-methylene-5,6,7,8-tetrahydrofolate + NADP(+) = (6R)-5,10-methenyltetrahydrofolate + NADPH. It catalyses the reaction (6R)-5,10-methenyltetrahydrofolate + H2O = (6R)-10-formyltetrahydrofolate + H(+). It participates in one-carbon metabolism; tetrahydrofolate interconversion. Functionally, catalyzes the oxidation of 5,10-methylenetetrahydrofolate to 5,10-methenyltetrahydrofolate and then the hydrolysis of 5,10-methenyltetrahydrofolate to 10-formyltetrahydrofolate. The protein is Bifunctional protein FolD of Leifsonia xyli subsp. xyli (strain CTCB07).